We begin with the raw amino-acid sequence, 314 residues long: Taste receptor type 2 member 42 (314 aa).

Residues 1–7 (MATELDK) lie on the Extracellular side of the membrane. The chain crosses the membrane as a helical span at residues 8-28 (IFLILEIAEFIIGMLGNVFIG). The Cytoplasmic portion of the chain corresponds to 29 to 50 (LVNCSEGIKNQKVFSADFILTC). A helical transmembrane segment spans residues 51 to 71 (LAISTIGQLFVILFDSFLVGL). The Extracellular portion of the chain corresponds to 72–101 (ASHLYTTYRLGKPVIMLWHMTNHLTTWLAT). A helical membrane pass occupies residues 102–122 (CLSIFYFFKIAHFPHSLFLWL). Over 123–127 (RWRMN) the chain is Cytoplasmic. The helical transmembrane segment at 128–148 (GMIVMLLILSLFLLIFDSLVL) threads the bilayer. Topologically, residues 149-187 (EIFIDISLNIIDKSNLTLYLDESKTLYDKLSILKTLLSL) are extracellular. Residue Asn-163 is glycosylated (N-linked (GlcNAc...) asparagine). The chain crosses the membrane as a helical span at residues 188–208 (TSFIPFSLSLTSLLFFFLSLV). At 209-238 (RHTRNLKLSSLGSRDSSTEAHRRAMKMVMS) the chain is on the cytoplasmic side. Residues 239–259 (FLFLFIVHFFSLQVANWIFFM) traverse the membrane as a helical segment. Residues 260–265 (LWNNKY) are Extracellular-facing. The chain crosses the membrane as a helical span at residues 266–286 (IKFAMLALNAFPSCHSFILIL). The Cytoplasmic segment spans residues 287-314 (GNSKLRQTAVRLLWHLRNYTKTPNALPL).

This sequence belongs to the G-protein coupled receptor T2R family.

The protein localises to the membrane. Its function is as follows. Receptor that may play a role in the perception of bitterness and is gustducin-linked. May play a role in sensing the chemical composition of the gastrointestinal content. The activity of this receptor may stimulate alpha gustducin, mediate PLC-beta-2 activation and lead to the gating of TRPM5. The sequence is that of Taste receptor type 2 member 42 (TAS2R42) from Pan paniscus (Pygmy chimpanzee).